The primary structure comprises 181 residues: Acireductone dioxygenase (181 aa).

Positions 97, 99, 103, and 141 each coordinate Fe(2+). The Ni(2+) site is built by histidine 97, histidine 99, glutamate 103, and histidine 141.

Belongs to the acireductone dioxygenase (ARD) family. As to quaternary structure, monomer. Fe(2+) serves as cofactor. The cofactor is Ni(2+).

It catalyses the reaction 1,2-dihydroxy-5-(methylsulfanyl)pent-1-en-3-one + O2 = 3-(methylsulfanyl)propanoate + CO + formate + 2 H(+). The catalysed reaction is 1,2-dihydroxy-5-(methylsulfanyl)pent-1-en-3-one + O2 = 4-methylsulfanyl-2-oxobutanoate + formate + 2 H(+). It functions in the pathway amino-acid biosynthesis; L-methionine biosynthesis via salvage pathway; L-methionine from S-methyl-5-thio-alpha-D-ribose 1-phosphate: step 5/6. In terms of biological role, catalyzes 2 different reactions between oxygen and the acireductone 1,2-dihydroxy-3-keto-5-methylthiopentene (DHK-MTPene) depending upon the metal bound in the active site. Fe-containing acireductone dioxygenase (Fe-ARD) produces formate and 2-keto-4-methylthiobutyrate (KMTB), the alpha-ketoacid precursor of methionine in the methionine recycle pathway. Ni-containing acireductone dioxygenase (Ni-ARD) produces methylthiopropionate, carbon monoxide and formate, and does not lie on the methionine recycle pathway. This chain is Acireductone dioxygenase, found in Stutzerimonas stutzeri (strain A1501) (Pseudomonas stutzeri).